A 496-amino-acid polypeptide reads, in one-letter code: Glutamyl-tRNA(Gln) amidotransferase subunit A, mitochondrial (496 aa).

Catalysis depends on charge relay system residues lysine 75 and serine 162. Residue serine 186 is the Acyl-ester intermediate of the active site.

This sequence belongs to the amidase family. GatA subfamily. In terms of assembly, subunit of the heterotrimeric GatCAB amidotransferase (AdT) complex, composed of A, B and C subunits.

The protein resides in the mitochondrion. The catalysed reaction is L-glutamyl-tRNA(Gln) + L-glutamine + ATP + H2O = L-glutaminyl-tRNA(Gln) + L-glutamate + ADP + phosphate + H(+). Functionally, allows the formation of correctly charged Gln-tRNA(Gln) through the transamidation of misacylated Glu-tRNA(Gln) in the mitochondria. The reaction takes place in the presence of glutamine and ATP through an activated gamma-phospho-Glu-tRNA(Gln). The protein is Glutamyl-tRNA(Gln) amidotransferase subunit A, mitochondrial of Pediculus humanus subsp. corporis (Body louse).